A 372-amino-acid polypeptide reads, in one-letter code: tRNA-specific 2-thiouridylase MnmA (372 aa).

ATP-binding positions include 17–24 (GMSGGVDS) and Met43. Residues 103 to 105 (NPD) are interaction with target base in tRNA. Cys108 serves as the catalytic Nucleophile. Cys108 and Cys207 are joined by a disulfide. Gly133 is an ATP binding site. Residues 157 to 159 (KDQ) form an interaction with tRNA region. The active-site Cysteine persulfide intermediate is the Cys207. The tract at residues 319–320 (RY) is interaction with tRNA.

It belongs to the MnmA/TRMU family.

The protein resides in the cytoplasm. It carries out the reaction S-sulfanyl-L-cysteinyl-[protein] + uridine(34) in tRNA + AH2 + ATP = 2-thiouridine(34) in tRNA + L-cysteinyl-[protein] + A + AMP + diphosphate + H(+). Its function is as follows. Catalyzes the 2-thiolation of uridine at the wobble position (U34) of tRNA, leading to the formation of s(2)U34. In Vibrio cholerae serotype O1 (strain ATCC 39541 / Classical Ogawa 395 / O395), this protein is tRNA-specific 2-thiouridylase MnmA.